Reading from the N-terminus, the 309-residue chain is High-affinity zinc uptake system protein AztC (309 aa).

Positions 1 to 24 are cleaved as a signal peptide; the sequence is MKDWLFRIATCSIMTFSSLAAAQA. His-61 serves as a coordination point for Zn(2+). Positions 117 to 132 are D-loop; it reads GGGHYHYIDGKAVFHA. His-138 lines the Zn(2+) pocket. A disulfide bond links Cys-158 and Cys-165. His-204 contacts Zn(2+). The tract at residues 222–229 is Z-loop; sequence QGVSTESE. Asp-279 contacts Zn(2+).

Belongs to the bacterial solute-binding protein 9 family. In terms of assembly, monomer.

The protein localises to the periplasm. Functionally, part of the ATP-binding cassette (ABC) transport system AztABCD involved in zinc import. Binds zinc with high affinity and specificity and delivers it to the membrane permease for translocation into the cytoplasm. The polypeptide is High-affinity zinc uptake system protein AztC (Paracoccus denitrificans (strain Pd 1222)).